Reading from the N-terminus, the 294-residue chain is Protoheme IX farnesyltransferase (294 aa).

Helical transmembrane passes span 13 to 33 (IIFG…KGVI), 35 to 55 (YPLF…GCVF), 84 to 104 (ISLI…YAAA), 107 to 127 (LAMQ…SLYM), 132 to 152 (VYGT…GYCA), 162 to 182 (LILL…IAIF), 208 to 228 (IILY…SGYA), 229 to 249 (GYKY…MALS), and 264 to 284 (FIFS…DPHV).

This sequence belongs to the UbiA prenyltransferase family. Protoheme IX farnesyltransferase subfamily.

The protein resides in the cell inner membrane. The catalysed reaction is heme b + (2E,6E)-farnesyl diphosphate + H2O = Fe(II)-heme o + diphosphate. It participates in porphyrin-containing compound metabolism; heme O biosynthesis; heme O from protoheme: step 1/1. Functionally, converts heme B (protoheme IX) to heme O by substitution of the vinyl group on carbon 2 of heme B porphyrin ring with a hydroxyethyl farnesyl side group. This chain is Protoheme IX farnesyltransferase, found in Photorhabdus laumondii subsp. laumondii (strain DSM 15139 / CIP 105565 / TT01) (Photorhabdus luminescens subsp. laumondii).